The following is a 416-amino-acid chain: Polyadenylation and cleavage factor homolog 1 (416 aa).

Positions 1 to 17 (MASNGSFSAQRNANART) are enriched in polar residues. Residues 1–80 (MASNGSFSAQ…NNNNVSRVSS (80 aa)) form a disordered region. Over residues 70–80 (SNNNNVSRVSS) the composition is skewed to low complexity. A coiled-coil region spans residues 199–220 (KELTDLLSLLNNEKEKKTLEAS). The C2H2-type zinc-finger motif lies at 254–276 (RQCSSCGLRFKCQEEHSKHMDWH).

In terms of assembly, forms a complex with cleavage and polyadenylation specificity factor (CPSF) subunits CLPS3, CLPS5, CPSF30, PCFS4, PCFS5, CSTF77 and FIPS3.

Its subcellular location is the nucleus. The polypeptide is Polyadenylation and cleavage factor homolog 1 (Arabidopsis thaliana (Mouse-ear cress)).